Here is a 434-residue protein sequence, read N- to C-terminus: ATP-dependent protease ATPase subunit HslU (434 aa).

Residues Val-18, 60 to 65 (GVGKTE), Asp-247, Glu-312, and Arg-384 contribute to the ATP site.

It belongs to the ClpX chaperone family. HslU subfamily. A double ring-shaped homohexamer of HslV is capped on each side by a ring-shaped HslU homohexamer. The assembly of the HslU/HslV complex is dependent on binding of ATP.

It is found in the cytoplasm. ATPase subunit of a proteasome-like degradation complex; this subunit has chaperone activity. The binding of ATP and its subsequent hydrolysis by HslU are essential for unfolding of protein substrates subsequently hydrolyzed by HslV. HslU recognizes the N-terminal part of its protein substrates and unfolds these before they are guided to HslV for hydrolysis. In Bradyrhizobium diazoefficiens (strain JCM 10833 / BCRC 13528 / IAM 13628 / NBRC 14792 / USDA 110), this protein is ATP-dependent protease ATPase subunit HslU.